A 400-amino-acid polypeptide reads, in one-letter code: Argininosuccinate synthase (400 aa).

An ATP-binding site is contributed by 9-17; sequence AYSGGLDTS. Tyrosine 87 lines the L-citrulline pocket. Glycine 117 contacts ATP. Positions 119, 123, and 124 each coordinate L-aspartate. Position 123 (asparagine 123) interacts with L-citrulline. L-citrulline is bound by residues arginine 127, serine 176, serine 185, glutamate 261, and tyrosine 273.

It belongs to the argininosuccinate synthase family. Type 1 subfamily. In terms of assembly, homotetramer.

The protein localises to the cytoplasm. The enzyme catalyses L-citrulline + L-aspartate + ATP = 2-(N(omega)-L-arginino)succinate + AMP + diphosphate + H(+). It functions in the pathway amino-acid biosynthesis; L-arginine biosynthesis; L-arginine from L-ornithine and carbamoyl phosphate: step 2/3. The polypeptide is Argininosuccinate synthase (Chlorobium limicola (strain DSM 245 / NBRC 103803 / 6330)).